We begin with the raw amino-acid sequence, 70 residues long: Small ribosomal subunit protein bS21C (70 aa).

The segment at tyrosine 38–tyrosine 70 is disordered. The segment covering arginine 45–tyrosine 70 has biased composition (basic residues).

Belongs to the bacterial ribosomal protein bS21 family.

The polypeptide is Small ribosomal subunit protein bS21C (Burkholderia thailandensis (strain ATCC 700388 / DSM 13276 / CCUG 48851 / CIP 106301 / E264)).